The following is an 87-amino-acid chain: MANIKSAKKRAVTSEKRRKHNASRRSMMRTFIKKVYAAIATGDKAAAQNAFNEMQPLVDRQAAKGLIHKNKAARHKANLTAQISKMA.

The disordered stretch occupies residues 1-27; that stretch reads MANIKSAKKRAVTSEKRRKHNASRRSM.

Belongs to the bacterial ribosomal protein bS20 family.

Functionally, binds directly to 16S ribosomal RNA. The sequence is that of Small ribosomal subunit protein bS20 from Erwinia tasmaniensis (strain DSM 17950 / CFBP 7177 / CIP 109463 / NCPPB 4357 / Et1/99).